The sequence spans 980 residues: Hypoxia up-regulated protein 1 (980 aa).

Positions 1–24 (MREKLSLWAIFCLVVAFLPSQTES) are cleaved as a signal peptide. Disordered stretches follow at residues 558 to 682 (EEES…DIAV) and 894 to 980 (KPKP…EDEL). 2 stretches are compositionally biased toward basic and acidic residues: residues 599–656 (AGKE…PEEK) and 896–906 (KPKDKAKDKNS). Polar residues predominate over residues 907-916 (TSESSKANST). Basic and acidic residues-rich tracts occupy residues 918–949 (DAEKVIPPKTEDGAEKVKPAEEPPVVEEKAEE) and 960–980 (TDDKTESTESSKSENHIEDEL). Positions 977–980 (EDEL) match the Prevents secretion from ER motif.

Belongs to the heat shock protein 70 family.

Its subcellular location is the endoplasmic reticulum lumen. In terms of biological role, has a pivotal role in cytoprotective cellular mechanisms triggered by oxygen deprivation. May play a role as a molecular chaperone and participate in protein folding. This chain is Hypoxia up-regulated protein 1 (hyou1), found in Danio rerio (Zebrafish).